A 792-amino-acid chain; its full sequence is Ribonucleoside-diphosphate reductase large subunit (792 aa).

Residues T200, 215–216 (SC), G246, 415–419 (NLCAE), and 606–610 (PTAGT) each bind substrate. A disulfide bond links C216 and C431. Residue N415 is the Proton acceptor of the active site. Residue C417 is the Cysteine radical intermediate of the active site. E419 serves as the catalytic Proton acceptor. The disordered stretch occupies residues 758–781 (SPPHSGMKQDGAWLPGPKNPEEES).

It belongs to the ribonucleoside diphosphate reductase large chain family. Heterotetramer composed of a homodimer of the large subunit (R1) and a homodimer of the small subunit (R2). Larger multisubunit protein complex are also active, composed of (R1)n(R2)n.

It carries out the reaction a 2'-deoxyribonucleoside 5'-diphosphate + [thioredoxin]-disulfide + H2O = a ribonucleoside 5'-diphosphate + [thioredoxin]-dithiol. Functionally, ribonucleoside-diphosphate reductase holoenzyme provides the precursors necessary for viral DNA synthesis. Allows virus growth in non-dividing cells, as well as reactivation from latency in infected hosts. Catalyzes the biosynthesis of deoxyribonucleotides from the corresponding ribonucleotides. The sequence is that of Ribonucleoside-diphosphate reductase large subunit from Human herpesvirus 8 type P (isolate GK18) (HHV-8).